Here is a 290-residue protein sequence, read N- to C-terminus: NH(3)-dependent NAD(+) synthetase (290 aa).

33–40 (GVSGGVDS) is an ATP binding site. Position 39 (Asp-39) interacts with Mg(2+). Arg-154 contacts deamido-NAD(+). Thr-174 contributes to the ATP binding site. Position 179 (Glu-179) interacts with Mg(2+). Deamido-NAD(+) is bound by residues Lys-187 and Asp-194. ATP is bound by residues Lys-203 and Ser-225.

Belongs to the NAD synthetase family. As to quaternary structure, homodimer.

The enzyme catalyses deamido-NAD(+) + NH4(+) + ATP = AMP + diphosphate + NAD(+) + H(+). It functions in the pathway cofactor biosynthesis; NAD(+) biosynthesis; NAD(+) from deamido-NAD(+) (ammonia route): step 1/1. In terms of biological role, catalyzes the ATP-dependent amidation of deamido-NAD to form NAD. Uses ammonia as a nitrogen source. The chain is NH(3)-dependent NAD(+) synthetase from Thermotoga neapolitana (strain ATCC 49049 / DSM 4359 / NBRC 107923 / NS-E).